We begin with the raw amino-acid sequence, 159 residues long: MTTPLCYSSPVNTPLSPSLLLLSLLLLLSTICGVLPLSLFCCGIGTGITLFNFDDTSDIIAVDIASAICFIIFCNGFCCCCCSGDPPYASSTTSLAICDGMLSLLRGDPPPVAVTYAPIFIAFCMHNSMSLIESKSGLTAFLTRVTMTSSMLPFSSIIS.

Helical transmembrane passes span 20-40 and 59-79; these read LLLSLLLLLSTICGVLPLSLF and IIAVDIASAICFIIFCNGFCC. The Cell attachment site signature appears at 106-108; sequence RGD.

It is found in the host membrane. The protein is Putative transmembrane protein ORF159 of Acidianus sp. F28 (AFV-2).